The sequence spans 177 residues: Large ribosomal subunit protein uL6 (177 aa).

It belongs to the universal ribosomal protein uL6 family. Part of the 50S ribosomal subunit.

Functionally, this protein binds to the 23S rRNA, and is important in its secondary structure. It is located near the subunit interface in the base of the L7/L12 stalk, and near the tRNA binding site of the peptidyltransferase center. This Vibrio vulnificus (strain CMCP6) protein is Large ribosomal subunit protein uL6.